The sequence spans 381 residues: Queuine tRNA-ribosyltransferase (381 aa).

Asp-96 acts as the Proton acceptor in catalysis. Substrate is bound by residues 96–100, Asp-150, Gln-193, and Gly-220; that span reads DSGGF. Positions 251–257 are RNA binding; it reads GVGSPDS. The Nucleophile role is filled by Asp-270. The tract at residues 275–279 is RNA binding; important for wobble base 34 recognition; sequence TRIAR. 4 residues coordinate Zn(2+): Cys-308, Cys-310, Cys-313, and His-339.

This sequence belongs to the queuine tRNA-ribosyltransferase family. In terms of assembly, homodimer. Within each dimer, one monomer is responsible for RNA recognition and catalysis, while the other monomer binds to the replacement base PreQ1. Requires Zn(2+) as cofactor.

The catalysed reaction is 7-aminomethyl-7-carbaguanine + guanosine(34) in tRNA = 7-aminomethyl-7-carbaguanosine(34) in tRNA + guanine. It participates in tRNA modification; tRNA-queuosine biosynthesis. In terms of biological role, catalyzes the base-exchange of a guanine (G) residue with the queuine precursor 7-aminomethyl-7-deazaguanine (PreQ1) at position 34 (anticodon wobble position) in tRNAs with GU(N) anticodons (tRNA-Asp, -Asn, -His and -Tyr). Catalysis occurs through a double-displacement mechanism. The nucleophile active site attacks the C1' of nucleotide 34 to detach the guanine base from the RNA, forming a covalent enzyme-RNA intermediate. The proton acceptor active site deprotonates the incoming PreQ1, allowing a nucleophilic attack on the C1' of the ribose to form the product. After dissociation, two additional enzymatic reactions on the tRNA convert PreQ1 to queuine (Q), resulting in the hypermodified nucleoside queuosine (7-(((4,5-cis-dihydroxy-2-cyclopenten-1-yl)amino)methyl)-7-deazaguanosine). The protein is Queuine tRNA-ribosyltransferase of Bacillus pumilus (strain SAFR-032).